A 238-amino-acid polypeptide reads, in one-letter code: Sugar fermentation stimulation protein homolog (238 aa).

The protein belongs to the SfsA family.

This Histophilus somni (strain 2336) (Haemophilus somnus) protein is Sugar fermentation stimulation protein homolog.